We begin with the raw amino-acid sequence, 157 residues long: ATP synthase subunit b' (157 aa).

Residues 22–42 (ATLPLIAIQFLLLVAVLNSLF) form a helical membrane-spanning segment.

The protein belongs to the ATPase B chain family. As to quaternary structure, F-type ATPases have 2 components, F(1) - the catalytic core - and F(0) - the membrane proton channel. F(1) has five subunits: alpha(3), beta(3), gamma(1), delta(1), epsilon(1). F(0) has four main subunits: a(1), b(1), b'(1) and c(10-14). The alpha and beta chains form an alternating ring which encloses part of the gamma chain. F(1) is attached to F(0) by a central stalk formed by the gamma and epsilon chains, while a peripheral stalk is formed by the delta, b and b' chains.

It is found in the cellular thylakoid membrane. Its function is as follows. F(1)F(0) ATP synthase produces ATP from ADP in the presence of a proton or sodium gradient. F-type ATPases consist of two structural domains, F(1) containing the extramembraneous catalytic core and F(0) containing the membrane proton channel, linked together by a central stalk and a peripheral stalk. During catalysis, ATP synthesis in the catalytic domain of F(1) is coupled via a rotary mechanism of the central stalk subunits to proton translocation. Component of the F(0) channel, it forms part of the peripheral stalk, linking F(1) to F(0). The b'-subunit is a diverged and duplicated form of b found in plants and photosynthetic bacteria. The polypeptide is ATP synthase subunit b' (Synechococcus sp. (strain JA-2-3B'a(2-13)) (Cyanobacteria bacterium Yellowstone B-Prime)).